The sequence spans 258 residues: Ribosomal RNA small subunit methyltransferase A (258 aa).

Residues asparagine 12, leucine 14, glycine 38, glutamate 59, aspartate 83, and asparagine 100 each contribute to the S-adenosyl-L-methionine site.

Belongs to the class I-like SAM-binding methyltransferase superfamily. rRNA adenine N(6)-methyltransferase family. RsmA subfamily.

It localises to the cytoplasm. The enzyme catalyses adenosine(1518)/adenosine(1519) in 16S rRNA + 4 S-adenosyl-L-methionine = N(6)-dimethyladenosine(1518)/N(6)-dimethyladenosine(1519) in 16S rRNA + 4 S-adenosyl-L-homocysteine + 4 H(+). In terms of biological role, specifically dimethylates two adjacent adenosines (A1518 and A1519) in the loop of a conserved hairpin near the 3'-end of 16S rRNA in the 30S particle. May play a critical role in biogenesis of 30S subunits. The sequence is that of Ribosomal RNA small subunit methyltransferase A from Metamycoplasma arthritidis (strain 158L3-1) (Mycoplasma arthritidis).